The chain runs to 461 residues: Nuclear distribution protein PAC1 (461 aa).

The LisH domain occupies 9–41 (QAEELHKAIIAYLSANNLSSSATALRTELGLAE). Residues 61-88 (TSVVRLQKKIMDLESRNNALQSELDNAT) are a coiled coil. 8 WD repeats span residues 114 to 155 (SHQN…RTIK), 157 to 197 (HTRP…KNIR), 201 to 248 (GHDH…CLKT), 251 to 290 (GHTA…PENR), 295 to 355 (GHDH…LKTL), 357 to 396 (GHDN…KCVK), 401 to 444 (VHER…VRIR), and 446 to 461 (VIAT…IFAN).

The protein belongs to the WD repeat LIS1/nudF family. In terms of assembly, self-associates. Interacts with NDL1 and dynein.

It localises to the cytoplasm. It is found in the cytoskeleton. The protein localises to the spindle pole. Functionally, positively regulates the activity of the minus-end directed microtubule motor protein dynein. May enhance dynein-mediated microtubule sliding by targeting dynein to the microtubule plus end. Required for nuclear migration during vegetative growth as well as development. Required for retrograde early endosome (EE) transport from the hyphal tip. Required for localization of dynein to the mitotic spindle poles. Recruits additional proteins to the dynein complex at SPBs. The chain is Nuclear distribution protein PAC1 from Pyricularia oryzae (strain 70-15 / ATCC MYA-4617 / FGSC 8958) (Rice blast fungus).